A 178-amino-acid polypeptide reads, in one-letter code: Peptide deformylase (178 aa).

Fe cation is bound by residues cysteine 102 and histidine 144. Residue glutamate 145 is part of the active site. Histidine 148 contributes to the Fe cation binding site.

This sequence belongs to the polypeptide deformylase family. The cofactor is Fe(2+).

The enzyme catalyses N-terminal N-formyl-L-methionyl-[peptide] + H2O = N-terminal L-methionyl-[peptide] + formate. In terms of biological role, removes the formyl group from the N-terminal Met of newly synthesized proteins. Requires at least a dipeptide for an efficient rate of reaction. N-terminal L-methionine is a prerequisite for activity but the enzyme has broad specificity at other positions. The protein is Peptide deformylase of Leptospira interrogans serogroup Icterohaemorrhagiae serovar copenhageni (strain Fiocruz L1-130).